The following is a 106-amino-acid chain: L-rhamnose mutarotase (106 aa).

Tyr20 is a binding site for substrate. His24 serves as the catalytic Proton donor. Substrate is bound by residues Tyr43 and 78-79 (WW).

This sequence belongs to the rhamnose mutarotase family. In terms of assembly, homodimer.

Its subcellular location is the cytoplasm. The catalysed reaction is alpha-L-rhamnose = beta-L-rhamnose. It functions in the pathway carbohydrate metabolism; L-rhamnose metabolism. Its function is as follows. Involved in the anomeric conversion of L-rhamnose. This is L-rhamnose mutarotase from Rhizobium johnstonii (strain DSM 114642 / LMG 32736 / 3841) (Rhizobium leguminosarum bv. viciae).